The sequence spans 246 residues: 2-deoxyglucose-6-phosphate phosphatase 2 (246 aa).

The active-site Nucleophile is the aspartate 83. Aspartate 83 contacts Mg(2+). Substrate-binding positions include aspartate 83, glutamate 92, and 146–149; that span reads DVKN. Aspartate 183 provides a ligand contact to Mg(2+).

Belongs to the HAD-like hydrolase superfamily. DOG/GPP family. Mg(2+) is required as a cofactor.

It carries out the reaction 2-deoxy-D-glucose 6-phosphate + H2O = 2-deoxy-D-glucose + phosphate. In terms of biological role, phosphatase that is active on 2-deoxy-D-glucose 6-phosphate (2-DOG-6P), but not very active on fructose-1-P. The protein is 2-deoxyglucose-6-phosphate phosphatase 2 of Saccharomyces cerevisiae (strain ATCC 204508 / S288c) (Baker's yeast).